Here is a 291-residue protein sequence, read N- to C-terminus: Bifunctional protein FolD (291 aa).

Residues 166-168, Ile191, and Ile232 each bind NADP(+); that span reads GAG.

The protein belongs to the tetrahydrofolate dehydrogenase/cyclohydrolase family. Homodimer.

The catalysed reaction is (6R)-5,10-methylene-5,6,7,8-tetrahydrofolate + NADP(+) = (6R)-5,10-methenyltetrahydrofolate + NADPH. The enzyme catalyses (6R)-5,10-methenyltetrahydrofolate + H2O = (6R)-10-formyltetrahydrofolate + H(+). Its pathway is one-carbon metabolism; tetrahydrofolate interconversion. In terms of biological role, catalyzes the oxidation of 5,10-methylenetetrahydrofolate to 5,10-methenyltetrahydrofolate and then the hydrolysis of 5,10-methenyltetrahydrofolate to 10-formyltetrahydrofolate. This chain is Bifunctional protein FolD, found in Aquifex aeolicus (strain VF5).